Consider the following 452-residue polypeptide: UDP-N-acetylmuramoylalanine--D-glutamate ligase (452 aa).

ATP is bound at residue 119–125 (GSNGKTT).

It belongs to the MurCDEF family.

It is found in the cytoplasm. The catalysed reaction is UDP-N-acetyl-alpha-D-muramoyl-L-alanine + D-glutamate + ATP = UDP-N-acetyl-alpha-D-muramoyl-L-alanyl-D-glutamate + ADP + phosphate + H(+). Its pathway is cell wall biogenesis; peptidoglycan biosynthesis. Its function is as follows. Cell wall formation. Catalyzes the addition of glutamate to the nucleotide precursor UDP-N-acetylmuramoyl-L-alanine (UMA). The sequence is that of UDP-N-acetylmuramoylalanine--D-glutamate ligase from Streptococcus pyogenes serotype M12 (strain MGAS9429).